Reading from the N-terminus, the 245-residue chain is tRNA pseudouridine synthase A (245 aa).

The Nucleophile role is filled by aspartate 52. Tyrosine 111 lines the substrate pocket.

It belongs to the tRNA pseudouridine synthase TruA family. In terms of assembly, homodimer.

The enzyme catalyses uridine(38/39/40) in tRNA = pseudouridine(38/39/40) in tRNA. In terms of biological role, formation of pseudouridine at positions 38, 39 and 40 in the anticodon stem and loop of transfer RNAs. The chain is tRNA pseudouridine synthase A from Rickettsia peacockii (strain Rustic).